The chain runs to 160 residues: Cytochrome b6-f complex subunit 4 (160 aa).

The next 3 membrane-spanning stretches (helical) occupy residues 36–56 (ILYM…GLSI), 95–115 (LVGV…PFIE), and 127–147 (PIAT…GIGA).

The protein belongs to the cytochrome b family. PetD subfamily. The 4 large subunits of the cytochrome b6-f complex are cytochrome b6, subunit IV (17 kDa polypeptide, petD), cytochrome f and the Rieske protein, while the 4 small subunits are petG, petL, petM and petN. The complex functions as a dimer.

It localises to the plastid. Its subcellular location is the chloroplast thylakoid membrane. Functionally, component of the cytochrome b6-f complex, which mediates electron transfer between photosystem II (PSII) and photosystem I (PSI), cyclic electron flow around PSI, and state transitions. The sequence is that of Cytochrome b6-f complex subunit 4 from Gracilaria tenuistipitata var. liui (Red alga).